A 92-amino-acid chain; its full sequence is Small ribosomal subunit protein bS18 (92 aa).

The disordered stretch occupies residues 1–27 (MTQQSNSADRKPRGKGPKRPRKPKVDP). Basic residues predominate over residues 12–22 (PRGKGPKRPRK).

Belongs to the bacterial ribosomal protein bS18 family. As to quaternary structure, part of the 30S ribosomal subunit. Forms a tight heterodimer with protein bS6.

In terms of biological role, binds as a heterodimer with protein bS6 to the central domain of the 16S rRNA, where it helps stabilize the platform of the 30S subunit. The protein is Small ribosomal subunit protein bS18 of Deinococcus deserti (strain DSM 17065 / CIP 109153 / LMG 22923 / VCD115).